A 465-amino-acid chain; its full sequence is A-type ATP synthase subunit B (465 aa).

Belongs to the ATPase alpha/beta chains family. Has multiple subunits with at least A(3), B(3), C, D, E, F, H, I and proteolipid K(x).

Its subcellular location is the cell membrane. Functionally, component of the A-type ATP synthase that produces ATP from ADP in the presence of a proton gradient across the membrane. The B chain is a regulatory subunit. The polypeptide is A-type ATP synthase subunit B (Thermococcus kodakarensis (strain ATCC BAA-918 / JCM 12380 / KOD1) (Pyrococcus kodakaraensis (strain KOD1))).